The sequence spans 240 residues: 7-cyano-7-deazaguanine synthase (240 aa).

14–24 (FSGGQDSATCL) serves as a coordination point for ATP. Zn(2+) contacts are provided by Cys202, Cys217, Cys220, and Cys223.

The protein belongs to the QueC family. Zn(2+) is required as a cofactor.

The catalysed reaction is 7-carboxy-7-deazaguanine + NH4(+) + ATP = 7-cyano-7-deazaguanine + ADP + phosphate + H2O + H(+). Its pathway is purine metabolism; 7-cyano-7-deazaguanine biosynthesis. Its function is as follows. Catalyzes the ATP-dependent conversion of 7-carboxy-7-deazaguanine (CDG) to 7-cyano-7-deazaguanine (preQ(0)). In Rhodopseudomonas palustris (strain BisB18), this protein is 7-cyano-7-deazaguanine synthase.